Here is an 873-residue protein sequence, read N- to C-terminus: Leucine--tRNA ligase (873 aa).

Residues 48-58 (PYPSGKLHMGH) carry the 'HIGH' region motif. The 'KMSKS' region signature appears at 636-640 (KMSKS). Lys-639 lines the ATP pocket.

This sequence belongs to the class-I aminoacyl-tRNA synthetase family.

Its subcellular location is the cytoplasm. It carries out the reaction tRNA(Leu) + L-leucine + ATP = L-leucyl-tRNA(Leu) + AMP + diphosphate. The sequence is that of Leucine--tRNA ligase from Cupriavidus pinatubonensis (strain JMP 134 / LMG 1197) (Cupriavidus necator (strain JMP 134)).